Consider the following 191-residue polypeptide: 3-isopropylmalate dehydratase small subunit (191 aa).

This sequence belongs to the LeuD family. LeuD type 1 subfamily. As to quaternary structure, heterodimer of LeuC and LeuD.

The enzyme catalyses (2R,3S)-3-isopropylmalate = (2S)-2-isopropylmalate. It functions in the pathway amino-acid biosynthesis; L-leucine biosynthesis; L-leucine from 3-methyl-2-oxobutanoate: step 2/4. Catalyzes the isomerization between 2-isopropylmalate and 3-isopropylmalate, via the formation of 2-isopropylmaleate. This chain is 3-isopropylmalate dehydratase small subunit, found in Solibacter usitatus (strain Ellin6076).